Here is an 811-residue protein sequence, read N- to C-terminus: Probable potassium transporter 16 (811 aa).

The Cytoplasmic portion of the chain corresponds to 1-66 (MAQQQAGARG…GQESWMRTLR (66 aa)). A helical membrane pass occupies residues 67 to 87 (LGFQCVGILHADLGTSPLYVY). Residues 88–100 (QNTFKYGIKHEDD) lie on the Extracellular side of the membrane. Residues 101–121 (IIGVLSLIIYSFVLFTMVKIV) traverse the membrane as a helical segment. The Cytoplasmic portion of the chain corresponds to 122–190 (FIALHANDDG…KSQLEKKPAK (69 aa)). The chain crosses the membrane as a helical span at residues 191-211 (IAVFFLTIFATALAISDCVLN). At 212–228 (PSVSVLSAVNGLKLRAP) the chain is on the extracellular side. A helical transmembrane segment spans residues 229–249 (HLTTDEVVWITVGILVVFFAV). Over 250–256 (QRFGTDK) the chain is Cytoplasmic. Residues 257-277 (IGYTFAPVVVVWLLLISGIGI) form a helical membrane-spanning segment. Residues 278-310 (YDLVKYDVGVLRAFNPKYIIDYFRRNKKDGWVQ) are Extracellular-facing. The helical transmembrane segment at 311 to 331 (LGEVLLTFTGTEALFADLGYF) threads the bilayer. Topologically, residues 332–337 (SIKSIQ) are cytoplasmic. Residues 338-358 (LSSTFVLLPSVLCTYIGQAAY) traverse the membrane as a helical segment. Residues 359–379 (LRKHMDQQHIQNAFFNSIPRP) lie on the Extracellular side of the membrane. The helical transmembrane segment at 380–400 (LFWPMFVLAIMTSVIGCQAMV) threads the bilayer. At 401-438 (SCAFATMSHLQTLNCFPRIKILHTSRRYSGQLYSPEVN) the chain is on the cytoplasmic side. A helical transmembrane segment spans residues 439–459 (FFLCLLSCVITLSFRTTGFIV). The Extracellular portion of the chain corresponds to 460–463 (KAHE). A helical membrane pass occupies residues 464–484 (ICVVLVMVITTILMTIVMLLV). Residues 485-488 (WKVN) lie on the Cytoplasmic side of the membrane. Residues 489-509 (IWWIVLFFVVFMSTETVYLSA) traverse the membrane as a helical segment. The Extracellular segment spans residues 510–519 (VLYKFTKGPY). The chain crosses the membrane as a helical span at residues 520–540 (MPLAMSAVLMVIMFVWHYVHV). Residues 541–811 (KRYKFELEHT…LLKVGITYEI (271 aa)) are Cytoplasmic-facing.

It belongs to the HAK/KUP transporter (TC 2.A.72.3) family.

The protein localises to the membrane. In terms of biological role, high-affinity potassium transporter. In Oryza sativa subsp. japonica (Rice), this protein is Probable potassium transporter 16 (HAK16).